A 777-amino-acid chain; its full sequence is Zinc finger FYVE domain-containing protein 1 (777 aa).

Residues 416–777 (MAHSSFFPDE…FNCNKKPGDL (362 aa)) are required for localization in the lipid droplets. FYVE-type zinc fingers lie at residues 598–659 (NSQI…DARN) and 715–775 (DHEI…KKPG). Residues C604, C607, C620, C623, C628, C631, C651, C654, C721, C724, C737, C740, C745, C748, C767, and C770 each coordinate Zn(2+).

Interacts with RAB18 (in GTP-bound form). Interacts with BSCL2 in a RAB18-dependent manner. Interacts with ZW10. In terms of tissue distribution, ubiquitous.

Its subcellular location is the golgi apparatus. It is found in the golgi stack. It localises to the endoplasmic reticulum. The protein localises to the preautophagosomal structure. The protein resides in the lipid droplet. Its subcellular location is the mitochondrion. Functionally, plays a role in the formation of lipid droplets (LDs) which are storage organelles at the center of lipid and energy homeostasis. Regulates the morphology, size and distribution of LDs. Mediates the formation of endoplasmic reticulum-lipid droplets (ER-LD) contact sites by forming a complex with RAB18 and ZW10. Binds to phosphatidylinositol 3-phosphate (PtdIns3P) through FYVE-type zinc finger. The chain is Zinc finger FYVE domain-containing protein 1 (Zfyve1) from Mus musculus (Mouse).